A 288-amino-acid polypeptide reads, in one-letter code: MRQTADLYCVLGNPIAHSRSPAIHARFAELTGERIRYERRLLPIDGFARGLRDFAAQGGRGCSVTVPFKTEALRCATACSERAQLAGAANTLSLHADGSISADNTDGLGLVADITRNAGIALAGCDVLLVGAGGAAAGVLGPLLHAGVRHITVANRTLAKAQALVQSHSALAALRKTQLKACGLQAPLADFDIIINASASSLAGADVPVPASVLRPASLAYDMMYGPAAQGFLDWARRHGARPRDGLGMLVEQAAEAFWLWRGLRPPSAQVLAELQEAAAKPASGADR.

Shikimate contacts are provided by residues S18–S20 and T65. The active-site Proton acceptor is the K69. E81 lines the NADP(+) pocket. Shikimate is bound by residues N90 and D106. Residues G131–A135, N155–K160, and M223 each bind NADP(+). Position 225 (Y225) interacts with shikimate. G246 contributes to the NADP(+) binding site.

The protein belongs to the shikimate dehydrogenase family. In terms of assembly, homodimer.

The catalysed reaction is shikimate + NADP(+) = 3-dehydroshikimate + NADPH + H(+). The protein operates within metabolic intermediate biosynthesis; chorismate biosynthesis; chorismate from D-erythrose 4-phosphate and phosphoenolpyruvate: step 4/7. Its function is as follows. Involved in the biosynthesis of the chorismate, which leads to the biosynthesis of aromatic amino acids. Catalyzes the reversible NADPH linked reduction of 3-dehydroshikimate (DHSA) to yield shikimate (SA). The chain is Shikimate dehydrogenase (NADP(+)) from Verminephrobacter eiseniae (strain EF01-2).